Consider the following 747-residue polypeptide: AT-rich interactive domain-containing protein 4 (747 aa).

The segment at 454–475 is disordered; that stretch reads PLPTRKRSEPCRESKEIENGGP. Over residues 459–471 the composition is skewed to basic and acidic residues; it reads KRSEPCRESKEIE. In terms of domain architecture, ARID spans 566 to 670; that stretch reads VCSEEEFLRD…YLLEYEYAHD (105 aa). A PHD-type zinc finger spans residues 674–730; that stretch reads GECCLICRSSTAGDWVNCGSCGEWAHFGCDRRPGLGAFKDYAKTDGLEYVCPNCSVS.

Its subcellular location is the nucleus. In Arabidopsis thaliana (Mouse-ear cress), this protein is AT-rich interactive domain-containing protein 4 (ARID4).